A 284-amino-acid polypeptide reads, in one-letter code: 2-dehydro-3-deoxyphosphooctonate aldolase (284 aa).

It belongs to the KdsA family.

Its subcellular location is the cytoplasm. The enzyme catalyses D-arabinose 5-phosphate + phosphoenolpyruvate + H2O = 3-deoxy-alpha-D-manno-2-octulosonate-8-phosphate + phosphate. The protein operates within carbohydrate biosynthesis; 3-deoxy-D-manno-octulosonate biosynthesis; 3-deoxy-D-manno-octulosonate from D-ribulose 5-phosphate: step 2/3. It participates in bacterial outer membrane biogenesis; lipopolysaccharide biosynthesis. The protein is 2-dehydro-3-deoxyphosphooctonate aldolase of Burkholderia cenocepacia (strain HI2424).